The chain runs to 178 residues: Large ribosomal subunit protein uL10 (178 aa).

The protein belongs to the universal ribosomal protein uL10 family. In terms of assembly, part of the ribosomal stalk of the 50S ribosomal subunit. The N-terminus interacts with L11 and the large rRNA to form the base of the stalk. The C-terminus forms an elongated spine to which L12 dimers bind in a sequential fashion forming a multimeric L10(L12)X complex.

Functionally, forms part of the ribosomal stalk, playing a central role in the interaction of the ribosome with GTP-bound translation factors. The chain is Large ribosomal subunit protein uL10 from Salinibacter ruber (strain DSM 13855 / M31).